We begin with the raw amino-acid sequence, 512 residues long: PTS system mannitol-specific EIICB component (512 aa).

Topologically, residues 1 to 28 are cytoplasmic; it reads MSQTEEKKGIGRRVQAFGSFLSSMIMPN. The PTS EIIC type-2 domain occupies 17–349; it reads FGSFLSSMIM…MKFTREPKQD (333 aa). Residues 29–50 form a helical membrane-spanning segment; the sequence is IGAFIAWGFIAAIFIDNGWLPN. The Extracellular portion of the chain corresponds to 51–54; it reads KDLA. Residues 55 to 75 form a helical membrane-spanning segment; that stretch reads TLAGPMITYLIPLLIAFSGGR. The Cytoplasmic segment spans residues 76–139; sequence LIYDLRGGII…QGFEMLFNNF (64 aa). The chain crosses the membrane as a helical span at residues 140-161; the sequence is SAGILGFIMTIAGFKILAPLMK. The Extracellular segment spans residues 162–170; it reads FIMHILSVA. A helical membrane pass occupies residues 171-191; the sequence is VEALVHAHLLPLVSILVEPAK. At 192-278 the chain is on the cytoplasmic side; sequence IVFLNNAINH…VLMRPLLFIA (87 aa). The helical transmembrane segment at 279–298 threads the bilayer; sequence VILGGMTGVATYQATGFGFK. At 299–318 the chain is on the extracellular side; the sequence is SPASPGSFIVYCLNAPRGEF. The chain crosses the membrane as a helical span at residues 319–340; that stretch reads LHMLLGVFLAALVSFVVAALIM. Topologically, residues 341–512 are cytoplasmic; sequence KFTREPKQDL…LNNLKKDDQA (172 aa). The segment at 355–402 is disordered; that stretch reads AQMENTKGKKSSVASKLVSSDKNVNTEENASGNVSETSSSDDDPEALL. Positions 365 to 376 are enriched in low complexity; that stretch reads SSVASKLVSSDK. The segment covering 380–392 has biased composition (polar residues); that stretch reads TEENASGNVSETS. The PTS EIIB type-2 domain occupies 419–512; it reads NHVIFACDAG…LNNLKKDDQA (94 aa). Cys425 acts as the Phosphocysteine intermediate; for EIIB activity in catalysis. A Phosphocysteine; by EIIA modification is found at Cys425.

In terms of assembly, homodimer.

The protein localises to the cell membrane. The catalysed reaction is D-mannitol(out) + N(pros)-phospho-L-histidyl-[protein] = D-mannitol 1-phosphate(in) + L-histidyl-[protein]. In terms of biological role, the phosphoenolpyruvate-dependent sugar phosphotransferase system (sugar PTS), a major carbohydrate active transport system, catalyzes the phosphorylation of incoming sugar substrates concomitantly with their translocation across the cell membrane. The enzyme II CmtAB PTS system is involved in D-mannitol transport. This Staphylococcus aureus (strain COL) protein is PTS system mannitol-specific EIICB component (mtlA).